Reading from the N-terminus, the 275-residue chain is MKNTVLTFKQAKEEKRRLSMLTAYDYSMAKIIDESGVNGILIGDSLGMVIKGEDDTLAVTMDEIIYHTKAVKKGAKNALIVSDMPFLSYHVSIEQAVLNAGRLIKEGGANAVKLEGGANVAAQIKAIVDAQIPVMGHIGLTPQSVNAFGGFKVQGKSESAAKQLIDDAVLIEKAGAFSIVLEGIPEKVAELITNAVSIPTIGIGAGKYCDGQILVYQDMLGMFNDFVPKFVKQYANVGNVMREAISSYVKEVQAGDFPEEKHTFKIDENELKKLY.

Mg(2+)-binding residues include D44 and D83. 3-methyl-2-oxobutanoate is bound by residues 44-45 (DS), D83, and K113. E115 is a binding site for Mg(2+). The active-site Proton acceptor is E182.

Belongs to the PanB family. In terms of assembly, homodecamer; pentamer of dimers. The cofactor is Mg(2+).

The protein localises to the cytoplasm. The enzyme catalyses 3-methyl-2-oxobutanoate + (6R)-5,10-methylene-5,6,7,8-tetrahydrofolate + H2O = 2-dehydropantoate + (6S)-5,6,7,8-tetrahydrofolate. It participates in cofactor biosynthesis; (R)-pantothenate biosynthesis; (R)-pantoate from 3-methyl-2-oxobutanoate: step 1/2. Functionally, catalyzes the reversible reaction in which hydroxymethyl group from 5,10-methylenetetrahydrofolate is transferred onto alpha-ketoisovalerate to form ketopantoate. The protein is 3-methyl-2-oxobutanoate hydroxymethyltransferase of Clostridium beijerinckii (strain ATCC 51743 / NCIMB 8052) (Clostridium acetobutylicum).